The following is a 368-amino-acid chain: Glycolate oxidase 2 (368 aa).

One can recognise an FMN hydroxy acid dehydrogenase domain in the interval 1–360; it reads MALVTNVCEY…TRGHVVTESD (360 aa). FMN-binding positions include 78–80, Ser107, 128–130, and Thr156; these read PTA and QLS. Arg165 contacts glyoxylate. Lys231 and Ser253 together coordinate FMN. Glyoxylate-binding residues include His255 and Arg258. His255 serves as the catalytic Proton acceptor. FMN-binding positions include 286–290 and 309–310; these read DSGFR and GR. The Microbody targeting signal motif lies at 366–368; the sequence is SRL.

Belongs to the FMN-dependent alpha-hydroxy acid dehydrogenase family. As to quaternary structure, homotetramer. FMN is required as a cofactor.

It localises to the peroxisome. The catalysed reaction is glycolate + O2 = glyoxylate + H2O2. The protein operates within photosynthesis; photorespiration; glycine from 2-phosphoglycolate: step 2/3. Its function is as follows. Catalyzes the oxidation of glycolate to glyoxylate, with a reduction of O2 to H2O2. Is a key enzyme in photorespiration in green plants. The chain is Glycolate oxidase 2 (GLO2) from Oryza sativa subsp. indica (Rice).